A 471-amino-acid polypeptide reads, in one-letter code: NADH-quinone oxidoreductase subunit N 1 (471 aa).

Transmembrane regions (helical) follow at residues 11–31 (ALVPEITLLVSAVTGLLAGAW), 39–59 (TIHVLAALATVVGLVATALAA), 81–101 (AIVLVAVLALIALSRDTVAGH), 105–125 (TEFVVLLQLGALGSIALAGAG), 127–147 (LIMLFAAFLLASVPFYALAGW), 162–182 (LAGALAGVTTAAGVTILFGVA), 200–220 (AAAAVGLIAVLAGLAFKAGAV), 234–254 (PPPVAAALTTVPKIGALVAFY), 270–290 (LITAVLATAGMTLGNLAAFAQ), 296–316 (MLGYSTVSQVGYLLMAVAVAG), 324–344 (ALLLYLAAYALTNIAGFAVVA), 365–385 (ALALTVALLGLVGTPPTAVFV), 398–418 (GLAWLVVIAALNTLASLFYYL), and 444–464 (AVALTTAALTLLLGIGSGIVL).

This sequence belongs to the complex I subunit 2 family. NDH-1 is composed of 14 different subunits. Subunits NuoA, H, J, K, L, M, N constitute the membrane sector of the complex.

It is found in the cell membrane. The catalysed reaction is a quinone + NADH + 5 H(+)(in) = a quinol + NAD(+) + 4 H(+)(out). In terms of biological role, NDH-1 shuttles electrons from NADH, via FMN and iron-sulfur (Fe-S) centers, to quinones in the respiratory chain. The immediate electron acceptor for the enzyme in this species is believed to be a menaquinone. Couples the redox reaction to proton translocation (for every two electrons transferred, four hydrogen ions are translocated across the cytoplasmic membrane), and thus conserves the redox energy in a proton gradient. This is NADH-quinone oxidoreductase subunit N 1 from Streptomyces griseus subsp. griseus (strain JCM 4626 / CBS 651.72 / NBRC 13350 / KCC S-0626 / ISP 5235).